The primary structure comprises 211 residues: Ribosomal RNA small subunit methyltransferase G (211 aa).

S-adenosyl-L-methionine contacts are provided by residues Gly76, Leu81, 127–128 (VE), and Arg142.

This sequence belongs to the methyltransferase superfamily. RNA methyltransferase RsmG family.

It localises to the cytoplasm. The enzyme catalyses guanosine(527) in 16S rRNA + S-adenosyl-L-methionine = N(7)-methylguanosine(527) in 16S rRNA + S-adenosyl-L-homocysteine. Specifically methylates the N7 position of guanine in position 527 of 16S rRNA. This is Ribosomal RNA small subunit methyltransferase G from Vibrio vulnificus (strain CMCP6).